The chain runs to 164 residues: S-ribosylhomocysteine lyase (164 aa).

Positions 54, 58, and 128 each coordinate Fe cation.

This sequence belongs to the LuxS family. In terms of assembly, homodimer. Fe cation is required as a cofactor.

It carries out the reaction S-(5-deoxy-D-ribos-5-yl)-L-homocysteine = (S)-4,5-dihydroxypentane-2,3-dione + L-homocysteine. Functionally, involved in the synthesis of autoinducer 2 (AI-2) which is secreted by bacteria and is used to communicate both the cell density and the metabolic potential of the environment. The regulation of gene expression in response to changes in cell density is called quorum sensing. Catalyzes the transformation of S-ribosylhomocysteine (RHC) to homocysteine (HC) and 4,5-dihydroxy-2,3-pentadione (DPD). The sequence is that of S-ribosylhomocysteine lyase from Campylobacter jejuni subsp. doylei (strain ATCC BAA-1458 / RM4099 / 269.97).